Consider the following 439-residue polypeptide: MEVTAKLIDFANANATVKIAQGAIKAEVEKLAKKASKTMKMDGFRAGKVPVAAILKRYEKELTRDAEQDLLRNAVDGALKEVKKDAKDLVGEPYFEKFDRKDGAIEAQMVLSFRPEVKLDGYEELVPTYNTPKVTQKEIDAKKEELLKRFATPEAIKEDRALKEGDFAKFDFEGFVDGKAFDGGKAQNYVLEIGSKQFIPGFEEGMIGLKIGEEKDINVTFPKEYGATHLAGKDAVFKVKLHEIQELKLPELNEELLKSLLPEEKEPSVEKLEAKLKEQLKNEKIFKLINDELKNQFAEALVAKFDFVLPKNIVEQETDMQFRSSLRNLSEEELKEFKDEAKYKEKRESFKEDAQKSVKLTFIIDELAKLRNVTVSDQELIQAIYFEAYRYGFNPQEHLDNYKKQGALPAIKMSLIEEKLFADIFKKNDKKKTEKESEK.

The 86-residue stretch at 165 to 250 (GDFAKFDFEG…LHEIQELKLP (86 aa)) folds into the PPIase FKBP-type domain.

Belongs to the FKBP-type PPIase family. Tig subfamily.

The protein resides in the cytoplasm. The enzyme catalyses [protein]-peptidylproline (omega=180) = [protein]-peptidylproline (omega=0). Its function is as follows. Involved in protein export. Acts as a chaperone by maintaining the newly synthesized protein in an open conformation. Functions as a peptidyl-prolyl cis-trans isomerase. In Campylobacter lari (strain RM2100 / D67 / ATCC BAA-1060), this protein is Trigger factor.